The primary structure comprises 114 residues: Putative pterin-4-alpha-carbinolamine dehydratase (114 aa).

The protein belongs to the pterin-4-alpha-carbinolamine dehydratase family.

It catalyses the reaction (4aS,6R)-4a-hydroxy-L-erythro-5,6,7,8-tetrahydrobiopterin = (6R)-L-erythro-6,7-dihydrobiopterin + H2O. In Chlorobium luteolum (strain DSM 273 / BCRC 81028 / 2530) (Pelodictyon luteolum), this protein is Putative pterin-4-alpha-carbinolamine dehydratase.